The sequence spans 444 residues: DNA primase DnaG (444 aa).

The Toprim domain occupies 186-260; the sequence is DSIIVVEGRN…EVDFVARAPP (75 aa). Residues glutamate 192, aspartate 234, and aspartate 236 each contribute to the Mg(2+) site.

It belongs to the archaeal DnaG primase family. In terms of assembly, forms a ternary complex with MCM helicase and DNA. Component of the archaeal exosome complex. The cofactor is Mg(2+).

The enzyme catalyses ssDNA + n NTP = ssDNA/pppN(pN)n-1 hybrid + (n-1) diphosphate.. RNA polymerase that catalyzes the synthesis of short RNA molecules used as primers for DNA polymerase during DNA replication. Also part of the exosome, which is a complex involved in RNA degradation. Acts as a poly(A)-binding protein that enhances the interaction between heteromeric, adenine-rich transcripts and the exosome. The sequence is that of DNA primase DnaG from Thermoplasma volcanium (strain ATCC 51530 / DSM 4299 / JCM 9571 / NBRC 15438 / GSS1).